Here is a 649-residue protein sequence, read N- to C-terminus: Transcription factor E2-alpha (649 aa).

Disordered regions lie at residues 34–107, 127–206, 222–267, 291–325, and 339–382; these read GKGR…SERS, LPGE…SAKT, LHPS…GLQQ, SAAP…SSSG, and DHSS…DGGL. Composition is skewed to polar residues over residues 56–76 and 85–94; these read SSGS…SRTY and SHNSLPSSTF. The segment covering 127-143 has biased composition (low complexity); it reads LPGELGLSSPGPLSPSG. 2 positions are modified to phosphoserine: S135 and S140. Residues 145–156 show a composition bias toward polar residues; the sequence is KSGSQYYPSYPS. A Nuclear localization signal motif is present at residues 171–177; it reads SKKVRKV. 2 stretches are compositionally biased toward low complexity: residues 182–193 and 242–259; these read PSSVYPSSSGDS and GDGS…SVGS. Residues 339-352 show a composition bias toward low complexity; that stretch reads DHSSNNFSPSPSTP. Phosphothreonine is present on T351. S355 bears the Phosphoserine mark. R367 carries the post-translational modification Omega-N-methylarginine. S375 is subject to Phosphoserine. Residues 385–420 form a leucine-zipper region; that stretch reads LSKMEDRLDEAIHVLRSHAVGTASDLHGLLPGHGAL. The segment at 431–547 is disordered; it reads GGRHAGLVGG…KAEREKERRV (117 aa). Positions 448 to 469 are enriched in polar residues; it reads TSGTSLLHTHASLPSQASSLPD. Residue K494 forms a Glycyl lysine isopeptide (Lys-Gly) (interchain with G-Cter in SUMO2) linkage. Position 524 is a phosphoserine (S524). E529 is subject to Phosphothreonine. Over residues 537-547 the composition is skewed to basic and acidic residues; that stretch reads QKAEREKERRV. The bHLH domain maps to 544-597; that stretch reads ERRVANNARERLRVRDINEAFKELGRMCQLHLSSEKPQTKLLILHQAVAVILSL. K620 participates in a covalent cross-link: Glycyl lysine isopeptide (Lys-Gly) (interchain with G-Cter in SUMO2).

Homodimer. Heterodimer; efficient DNA binding requires dimerization with another bHLH protein. Forms a heterodimer with TWIST1 and TWIST2. Forms a heterodimer with NEUROD1; the heterodimer is inhibited in presence of ID2, but not NR0B2, to E-box element. Forms a heterodimer with TCF15; the heterodimer binds E-box element. Forms a heterodimer with MYOG; heterodimerization enhances MYOG DNA-binding and transcriptional activities. Forms a heterodimer with ATOH8; repress transcription of TCF3 and TCF3-NEUROG3 dimer-induced transactivation of E box-dependent promoters. Component of a nuclear TAL-1 complex composed at least of CBFA2T3, LDB1, TAL1 and TCF3. Interacts with NEUROD2. Interacts with EP300. Interacts with PTF1A, TGFB1I1 and UBE2I. Interacts with BHLHA9. Interacts with ASB2; the interaction is mediated by SKP2 and targets TCF3 for Notch-induced proteasomal degradation. Interacts with transcription factor ASCL5/AmeloD. In terms of assembly, interacts with RALGAPA1. Interacts with FIGLA. As to quaternary structure, forms a heterodimer with ATOH7; required for ATOH7 DNA-binding. In terms of processing, phosphorylated following NGF stimulation. Post-translationally, undergoes Notch-induced ubiquitination and subsequent proteasomal degradation which is mediated by ASB1 or ASB2, the substrate-recognition components of probable ECS E3 ubiquitin-protein ligase complexes.

Its subcellular location is the nucleus. In terms of biological role, transcriptional regulator. Involved in the initiation of neuronal differentiation and mesenchymal to epithelial transition. Heterodimers between TCF3 and tissue-specific basic helix-loop-helix (bHLH) proteins play major roles in determining tissue-specific cell fate during embryogenesis, like muscle or early B-cell differentiation. Together with TCF15, required for the mesenchymal to epithelial transition. Dimers bind DNA on E-box motifs: 5'-CANNTG-3'. Binds to the kappa-E2 site in the kappa immunoglobulin gene enhancer. Binds to IEB1 and IEB2, which are short DNA sequences in the insulin gene transcription control region. Facilitates ATOH7 binding to DNA at the consensus sequence 5'-CAGGTG-3', and positively regulates transcriptional activity. This Mesocricetus auratus (Golden hamster) protein is Transcription factor E2-alpha (TCF3).